The sequence spans 203 residues: Small ribosomal subunit protein uS4 (203 aa).

The tract at residues 15–46 is disordered; that stretch reads LGENIWGRPKSSVNRRSYGPGQHGQRRKSKVS. Residues 94 to 154 form the S4 RNA-binding domain; that stretch reads QRLDMVVYRA…KKAKEMALIA (61 aa).

Belongs to the universal ribosomal protein uS4 family. As to quaternary structure, part of the 30S ribosomal subunit. Contacts protein S5. The interaction surface between S4 and S5 is involved in control of translational fidelity.

One of the primary rRNA binding proteins, it binds directly to 16S rRNA where it nucleates assembly of the body of the 30S subunit. Its function is as follows. With S5 and S12 plays an important role in translational accuracy. In Novosphingobium aromaticivorans (strain ATCC 700278 / DSM 12444 / CCUG 56034 / CIP 105152 / NBRC 16084 / F199), this protein is Small ribosomal subunit protein uS4.